A 237-amino-acid polypeptide reads, in one-letter code: Large ribosomal subunit protein uL1 (237 aa).

It belongs to the universal ribosomal protein uL1 family. As to quaternary structure, part of the 50S ribosomal subunit.

Its function is as follows. Binds directly to 23S rRNA. The L1 stalk is quite mobile in the ribosome, and is involved in E site tRNA release. Protein L1 is also a translational repressor protein, it controls the translation of the L11 operon by binding to its mRNA. This is Large ribosomal subunit protein uL1 from Solibacter usitatus (strain Ellin6076).